The chain runs to 80 residues: Putative membrane protein insertion efficiency factor (80 aa).

Belongs to the UPF0161 family.

It is found in the cell membrane. In terms of biological role, could be involved in insertion of integral membrane proteins into the membrane. The sequence is that of Putative membrane protein insertion efficiency factor from Corynebacterium jeikeium (strain K411).